The sequence spans 56 residues: MAVQQNKKSRSRRDMRRSHDALTTAAVSVDKTSGETHLRHHVTADGYYRGRKVINK.

A disordered region spans residues 1 to 38 (MAVQQNKKSRSRRDMRRSHDALTTAAVSVDKTSGETHL). A compositionally biased stretch (basic residues) spans 7-16 (KKSRSRRDMR).

This sequence belongs to the bacterial ribosomal protein bL32 family.

The protein is Large ribosomal subunit protein bL32 of Histophilus somni (strain 129Pt) (Haemophilus somnus).